The primary structure comprises 138 residues: Large ribosomal subunit protein uL16 (138 aa).

Positions 1 to 15 (MLSPRKVKYRKKQRG) are enriched in basic residues. Residues 1–20 (MLSPRKVKYRKKQRGRLSGE) form a disordered region.

Belongs to the universal ribosomal protein uL16 family. Part of the 50S ribosomal subunit.

Binds 23S rRNA and is also seen to make contacts with the A and possibly P site tRNAs. This is Large ribosomal subunit protein uL16 from Borrelia turicatae (strain 91E135).